Reading from the N-terminus, the 337-residue chain is Glyceraldehyde-3-phosphate dehydrogenase (337 aa).

NAD(+) contacts are provided by residues 12–13 (RI), Asp34, and Arg79. D-glyceraldehyde 3-phosphate-binding positions include 150–152 (SCT), Thr181, 210–211 (TG), and Arg233. Cys151 acts as the Nucleophile in catalysis. Asn315 provides a ligand contact to NAD(+).

This sequence belongs to the glyceraldehyde-3-phosphate dehydrogenase family. In terms of assembly, homotetramer.

The protein resides in the cytoplasm. The enzyme catalyses D-glyceraldehyde 3-phosphate + phosphate + NAD(+) = (2R)-3-phospho-glyceroyl phosphate + NADH + H(+). Its pathway is carbohydrate degradation; glycolysis; pyruvate from D-glyceraldehyde 3-phosphate: step 1/5. The polypeptide is Glyceraldehyde-3-phosphate dehydrogenase (GPD) (Coccidioides posadasii (strain C735) (Valley fever fungus)).